A 316-amino-acid polypeptide reads, in one-letter code: Olfactory receptor 5P79 (316 aa).

The Extracellular portion of the chain corresponds to 1-28 (MGILKDGNHTAVTEFILLGLTDDPVLKV). N8 carries an N-linked (GlcNAc...) asparagine glycan. Residues 29-49 (VLFTIILCIYLVTVSGNLSTI) traverse the membrane as a helical segment. Over 50–57 (LLIRVSSQ) the chain is Cytoplasmic. The helical transmembrane segment at 58–78 (LHHPMYFFLSHLASVDIGISS) threads the bilayer. At 79–102 (SVTPNMLVNFLLERSTISYLGCGI) the chain is on the extracellular side. C100 and C192 form a disulfide bridge. A helical transmembrane segment spans residues 103–123 (QLGSGAFFGSTESFLLAAMAY). Residues 124–136 (DHFMAICNPLLYS) are Cytoplasmic-facing. A helical membrane pass occupies residues 137 to 157 (TKMSTQVCIQLLVGSYIGGFL). The Extracellular portion of the chain corresponds to 158–199 (NASSFILSFFSFLFCGPNKVNHFFCDFTPLVELSCSDNSVLL). A helical membrane pass occupies residues 200 to 220 (ILDSFSAGSIIVITVLVIAIS). The Cytoplasmic segment spans residues 221–240 (YTYILITILKMHSTEGRHKA). Residues 241–261 (FSTCTSHLTAVTVFYGTVTFI) traverse the membrane as a helical segment. Residues 262–274 (YVMPKSSYSTDQN) lie on the Extracellular side of the membrane. The chain crosses the membrane as a helical span at residues 275 to 297 (KVLSVFYMIAIAIPMLNPLIYSL). The Cytoplasmic portion of the chain corresponds to 298–316 (RNNEIKNALKRQLSKKTFS).

Belongs to the G-protein coupled receptor 1 family.

Its subcellular location is the cell membrane. In terms of biological role, potential odorant receptor. In Mus musculus (Mouse), this protein is Olfactory receptor 5P79.